Consider the following 258-residue polypeptide: Mitochondrial distribution and morphology protein 12 (258 aa).

An SMP-LTD domain is found at 1–233 (MSFDIHWSNL…WPSWIELDFN (233 aa)). Residues 238–258 (EDLQQSKDTPTTANTGTTTTN) form a disordered region. Residues 246–258 (TPTTANTGTTTTN) show a composition bias toward low complexity.

Belongs to the MDM12 family. In terms of assembly, component of the ER-mitochondria encounter structure (ERMES) or MDM complex, composed of MMM1, MDM10, MDM12 and MDM34. An MMM1 homodimer associates with one molecule of MDM12 on each side in a pairwise head-to-tail manner, and the SMP-LTD domains of MMM1 and MDM12 generate a continuous hydrophobic tunnel for phospholipid trafficking.

The protein resides in the mitochondrion outer membrane. Its subcellular location is the endoplasmic reticulum membrane. Its function is as follows. Component of the ERMES/MDM complex, which serves as a molecular tether to connect the endoplasmic reticulum (ER) and mitochondria. Components of this complex are involved in the control of mitochondrial shape and protein biogenesis, and function in nonvesicular lipid trafficking between the ER and mitochondria. MDM12 is required for the interaction of the ER-resident membrane protein MMM1 and the outer mitochondrial membrane-resident beta-barrel protein MDM10. The MDM12-MMM1 subcomplex functions in the major beta-barrel assembly pathway that is responsible for biogenesis of all mitochondrial outer membrane beta-barrel proteins, and acts in a late step after the SAM complex. The MDM10-MDM12-MMM1 subcomplex further acts in the TOM40-specific pathway after the action of the MDM12-MMM1 complex. Essential for establishing and maintaining the structure of mitochondria and maintenance of mtDNA nucleoids. In Zygosaccharomyces rouxii (strain ATCC 2623 / CBS 732 / NBRC 1130 / NCYC 568 / NRRL Y-229), this protein is Mitochondrial distribution and morphology protein 12.